A 765-amino-acid chain; its full sequence is Probable beta-glucosidase M (765 aa).

An N-terminal signal peptide occupies residues 1-19 (MHSISALLSLLGGLALSSA). 5 N-linked (GlcNAc...) asparagine glycosylation sites follow: asparagine 24, asparagine 71, asparagine 93, asparagine 126, and asparagine 258. Aspartate 286 is a catalytic residue. Residues asparagine 314, asparagine 321, asparagine 432, asparagine 519, asparagine 541, and asparagine 647 are each glycosylated (N-linked (GlcNAc...) asparagine).

It belongs to the glycosyl hydrolase 3 family.

It is found in the secreted. The catalysed reaction is Hydrolysis of terminal, non-reducing beta-D-glucosyl residues with release of beta-D-glucose.. The protein operates within glycan metabolism; cellulose degradation. In terms of biological role, beta-glucosidases are one of a number of cellulolytic enzymes involved in the degradation of cellulosic biomass. Catalyzes the last step releasing glucose from the inhibitory cellobiose. The chain is Probable beta-glucosidase M (bglM) from Aspergillus niger (strain ATCC MYA-4892 / CBS 513.88 / FGSC A1513).